We begin with the raw amino-acid sequence, 465 residues long: tRNA-2-methylthio-N(6)-dimethylallyladenosine synthase (465 aa).

Positions 18–136 (RKLYIETYGC…LPNLVGAAEQ (119 aa)) constitute an MTTase N-terminal domain. Residues Cys27, Cys63, Cys100, Cys174, Cys178, and Cys181 each contribute to the [4Fe-4S] cluster site. Positions 160–392 (GGVHINGFVS…IALQNRLSEE (233 aa)) constitute a Radical SAM core domain. A TRAM domain is found at 395–458 (KRDISKTFEV…SATLFGEVVE (64 aa)).

It belongs to the methylthiotransferase family. MiaB subfamily. In terms of assembly, monomer. It depends on [4Fe-4S] cluster as a cofactor.

The protein resides in the cytoplasm. It catalyses the reaction N(6)-dimethylallyladenosine(37) in tRNA + (sulfur carrier)-SH + AH2 + 2 S-adenosyl-L-methionine = 2-methylsulfanyl-N(6)-dimethylallyladenosine(37) in tRNA + (sulfur carrier)-H + 5'-deoxyadenosine + L-methionine + A + S-adenosyl-L-homocysteine + 2 H(+). Catalyzes the methylthiolation of N6-(dimethylallyl)adenosine (i(6)A), leading to the formation of 2-methylthio-N6-(dimethylallyl)adenosine (ms(2)i(6)A) at position 37 in tRNAs that read codons beginning with uridine. This chain is tRNA-2-methylthio-N(6)-dimethylallyladenosine synthase, found in Porphyromonas gingivalis (strain ATCC 33277 / DSM 20709 / CIP 103683 / JCM 12257 / NCTC 11834 / 2561).